The primary structure comprises 280 residues: 2-dehydro-3-deoxyphosphooctonate aldolase (280 aa).

The protein belongs to the KdsA family.

It is found in the cytoplasm. The catalysed reaction is D-arabinose 5-phosphate + phosphoenolpyruvate + H2O = 3-deoxy-alpha-D-manno-2-octulosonate-8-phosphate + phosphate. It functions in the pathway carbohydrate biosynthesis; 3-deoxy-D-manno-octulosonate biosynthesis; 3-deoxy-D-manno-octulosonate from D-ribulose 5-phosphate: step 2/3. Its pathway is bacterial outer membrane biogenesis; lipopolysaccharide biosynthesis. The polypeptide is 2-dehydro-3-deoxyphosphooctonate aldolase (Desulfotalea psychrophila (strain LSv54 / DSM 12343)).